The chain runs to 178 residues: 2-C-methyl-D-erythritol 2,4-cyclodiphosphate synthase (178 aa).

Residues Asp-24, His-26, and His-61 each contribute to the a divalent metal cation site. 24–26 is a 4-CDP-2-C-methyl-D-erythritol 2-phosphate binding site; the sequence is DSH. 150-153 contributes to the 4-CDP-2-C-methyl-D-erythritol 2-phosphate binding site; sequence TSGE.

This sequence belongs to the IspF family. In terms of assembly, homotrimer. It depends on a divalent metal cation as a cofactor.

The catalysed reaction is 4-CDP-2-C-methyl-D-erythritol 2-phosphate = 2-C-methyl-D-erythritol 2,4-cyclic diphosphate + CMP. Its pathway is isoprenoid biosynthesis; isopentenyl diphosphate biosynthesis via DXP pathway; isopentenyl diphosphate from 1-deoxy-D-xylulose 5-phosphate: step 4/6. In terms of biological role, involved in the biosynthesis of isopentenyl diphosphate (IPP) and dimethylallyl diphosphate (DMAPP), two major building blocks of isoprenoid compounds. Catalyzes the conversion of 4-diphosphocytidyl-2-C-methyl-D-erythritol 2-phosphate (CDP-ME2P) to 2-C-methyl-D-erythritol 2,4-cyclodiphosphate (ME-CPP) with a corresponding release of cytidine 5-monophosphate (CMP). The polypeptide is 2-C-methyl-D-erythritol 2,4-cyclodiphosphate synthase (Chlamydia trachomatis serovar L2 (strain ATCC VR-902B / DSM 19102 / 434/Bu)).